A 250-amino-acid polypeptide reads, in one-letter code: Triosephosphate isomerase (250 aa).

Residue 9–11 (NWK) coordinates substrate. The active-site Electrophile is the His-100. The active-site Proton acceptor is Glu-169. Residues Gly-175, Ser-208, and 229–230 (GG) contribute to the substrate site.

Belongs to the triosephosphate isomerase family. As to quaternary structure, homodimer.

The protein resides in the cytoplasm. It carries out the reaction D-glyceraldehyde 3-phosphate = dihydroxyacetone phosphate. It functions in the pathway carbohydrate biosynthesis; gluconeogenesis. Its pathway is carbohydrate degradation; glycolysis; D-glyceraldehyde 3-phosphate from glycerone phosphate: step 1/1. Involved in the gluconeogenesis. Catalyzes stereospecifically the conversion of dihydroxyacetone phosphate (DHAP) to D-glyceraldehyde-3-phosphate (G3P). In Synechococcus sp. (strain JA-2-3B'a(2-13)) (Cyanobacteria bacterium Yellowstone B-Prime), this protein is Triosephosphate isomerase.